A 427-amino-acid chain; its full sequence is UPF0597 protein CPR_0790 (427 aa).

It belongs to the UPF0597 family.

The sequence is that of UPF0597 protein CPR_0790 from Clostridium perfringens (strain SM101 / Type A).